Consider the following 289-residue polypeptide: Oxaloacetate decarboxylase (289 aa).

Substrate is bound at residue S50. Mg(2+) is bound at residue D88. Substrate contacts are provided by R159 and H235.

The protein belongs to the isocitrate lyase/PEP mutase superfamily. Oxaloacetate decarboxylase family. In terms of assembly, homotetramer; dimer of dimers. It depends on Mg(2+) as a cofactor.

The enzyme catalyses oxaloacetate + H(+) = pyruvate + CO2. Functionally, catalyzes the decarboxylation of oxaloacetate into pyruvate. Seems to play a role in maintaining cellular concentrations of bicarbonate and pyruvate. In Pseudomonas savastanoi pv. phaseolicola (strain 1448A / Race 6) (Pseudomonas syringae pv. phaseolicola (strain 1448A / Race 6)), this protein is Oxaloacetate decarboxylase.